The chain runs to 305 residues: Hepatitis A virus cellular receptor 1 homolog (305 aa).

A signal peptide spans 1–21 (MNQIQVFISGLILLLPGAVDS). The Ig-like V-type domain maps to 22–122 (YVEVKGVVGH…PGWFNDQKVT (101 aa)). Residues 22-237 (YVEVKGVVGH…GKPQKNPTKG (216 aa)) are Extracellular-facing. Cystine bridges form between cysteine 37/cysteine 108, cysteine 49/cysteine 60, and cysteine 55/cysteine 107. Residues 129–185 (PEIPTRPPTRPTTTRPTATGRPTTISTRSTHVPTSIRVSTSTPPTSTHTWTHKPEPT) form a disordered region. Low complexity-rich tracts occupy residues 139–152 (PTTT…RPTT) and 161–177 (PTSI…STHT). N-linked (GlcNAc...) asparagine glycosylation occurs at asparagine 208. Residues 238–258 (FYVGICIAALLLLLLVSTVAI) traverse the membrane as a helical segment. Residues 259–305 (TRYILMKRKSASLSVVAFRVSKIEALQNAAVVHSRAEDNIYIVEDRP) are Cytoplasmic-facing.

Belongs to the immunoglobulin superfamily. TIM family. Interacts with STAM. Interacts with SELPLG. Expressed by stimulated T-cells. Expressed during primary antigen stimulation. Expressed at higher levels on B rather than T-cells, both constitutively and after activation.

The protein resides in the cell membrane. Phosphatidylserine receptor that plays an important functional role in regulatory B-cells homeostasis including generation, expansion and suppressor functions. As P-selectin/SELPLG ligand, plays a specialized role in activated but not naive T-cell trafficking during inflammatory responses. Controls thereby T-cell accumulation in the inflamed central nervous system (CNS) and the induction of autoimmune disease. Also regulates expression of various anti-inflammatory cytokines and co-inhibitory ligands including IL10. Acts as a regulator of T-cell proliferation. May play a role in kidney injury and repair. This is Hepatitis A virus cellular receptor 1 homolog (Havcr1) from Mus musculus (Mouse).